The following is a 214-amino-acid chain: Adenylate kinase (214 aa).

10-15 contacts ATP; that stretch reads GAGKGT. Residues 30–59 form an NMP region; it reads STGDLLREEIANNTELGKQAKKLIDGGNLV. AMP contacts are provided by residues threonine 31, arginine 36, 57–59, 83–86, and glutamine 90; these read NLV and GFPR. The tract at residues 124–161 is LID; sequence LRRQCKNCGNIFNLRFIKNFDGKCPKCGSTDIYQRADD. An ATP-binding site is contributed by arginine 125. Positions 128 and 131 each coordinate Zn(2+). 134–135 lines the ATP pocket; the sequence is IF. Cysteine 147 and cysteine 150 together coordinate Zn(2+). The AMP site is built by arginine 158 and arginine 169. ATP is bound at residue lysine 197.

This sequence belongs to the adenylate kinase family. Monomer.

Its subcellular location is the cytoplasm. The enzyme catalyses AMP + ATP = 2 ADP. The protein operates within purine metabolism; AMP biosynthesis via salvage pathway; AMP from ADP: step 1/1. Its function is as follows. Catalyzes the reversible transfer of the terminal phosphate group between ATP and AMP. Plays an important role in cellular energy homeostasis and in adenine nucleotide metabolism. This Elusimicrobium minutum (strain Pei191) protein is Adenylate kinase.